The sequence spans 333 residues: Anthranilate phosphoribosyltransferase (333 aa).

Residues G80, 83-84, T88, 90-93, 108-116, and S120 each bind 5-phospho-alpha-D-ribose 1-diphosphate; these read GD, NLST, and KHGNRSASG. G80 is an anthranilate binding site. S92 is a binding site for Mg(2+). Residue N111 participates in anthranilate binding. R166 contributes to the anthranilate binding site. Mg(2+) contacts are provided by D224 and E225.

It belongs to the anthranilate phosphoribosyltransferase family. Homodimer. The cofactor is Mg(2+).

The catalysed reaction is N-(5-phospho-beta-D-ribosyl)anthranilate + diphosphate = 5-phospho-alpha-D-ribose 1-diphosphate + anthranilate. It participates in amino-acid biosynthesis; L-tryptophan biosynthesis; L-tryptophan from chorismate: step 2/5. In terms of biological role, catalyzes the transfer of the phosphoribosyl group of 5-phosphorylribose-1-pyrophosphate (PRPP) to anthranilate to yield N-(5'-phosphoribosyl)-anthranilate (PRA). The polypeptide is Anthranilate phosphoribosyltransferase (Pyrobaculum aerophilum (strain ATCC 51768 / DSM 7523 / JCM 9630 / CIP 104966 / NBRC 100827 / IM2)).